We begin with the raw amino-acid sequence, 241 residues long: Translation initiation factor IF-3 (241 aa).

Residues 178-241 are disordered; that stretch reads KKTEAMAEAR…EAPAEASTEA (64 aa). Residues 180–197 show a composition bias toward basic and acidic residues; it reads TEAMAEAREAQAARKAEA. Residues 208 to 229 are compositionally biased toward acidic residues; that stretch reads ADEDIPEGELPEGEVPEAETTE. Positions 230 to 241 are enriched in low complexity; the sequence is AAEAPAEASTEA.

Belongs to the IF-3 family. As to quaternary structure, monomer.

The protein localises to the cytoplasm. Functionally, IF-3 binds to the 30S ribosomal subunit and shifts the equilibrium between 70S ribosomes and their 50S and 30S subunits in favor of the free subunits, thus enhancing the availability of 30S subunits on which protein synthesis initiation begins. The polypeptide is Translation initiation factor IF-3 (Streptomyces avermitilis (strain ATCC 31267 / DSM 46492 / JCM 5070 / NBRC 14893 / NCIMB 12804 / NRRL 8165 / MA-4680)).